Reading from the N-terminus, the 462-residue chain is General transcription factor IIH subunit 4 (462 aa).

This sequence belongs to the TFB2 family. In terms of assembly, component of the 7-subunit TFIIH core complex composed of XPB/ERCC3, XPD/ERCC2, GTF2H1, GTF2H2, GTF2H3, GTF2H4 and GTF2H5, which is active in NER. The core complex associates with the 3-subunit CDK-activating kinase (CAK) module composed of CCNH/cyclin H, CDK7 and MNAT1 to form the 10-subunit holoenzyme (holo-TFIIH) active in transcription. Part of TBP-based Pol II pre-initiation complex (PIC), in which Pol II core assembles with general transcription factors and other specific initiation factors including GTF2E1, GTF2E2, GTF2F1, GTF2F2, TCEA1, ERCC2, ERCC3, GTF2H2, GTF2H3, GTF2H4, GTF2H5, GTF2A1, GTF2A2, GTF2B and TBP; this large multi-subunit PIC complex mediates DNA unwinding and targets Pol II core to the transcription start site where the first phosphodiester bond forms.

Its subcellular location is the nucleus. Functionally, component of the general transcription and DNA repair factor IIH (TFIIH) core complex, which is involved in general and transcription-coupled nucleotide excision repair (NER) of damaged DNA and, when complexed to CAK, in RNA transcription by RNA polymerase II. In NER, TFIIH acts by opening DNA around the lesion to allow the excision of the damaged oligonucleotide and its replacement by a new DNA fragment. In transcription, TFIIH has an essential role in transcription initiation. When the pre-initiation complex (PIC) has been established, TFIIH is required for promoter opening and promoter escape. Phosphorylation of the C-terminal tail (CTD) of the largest subunit of RNA polymerase II by the kinase module CAK controls the initiation of transcription. In terms of biological role, stimulates the ATPase activity of TFIIH subunit XPB/ERCC3. This is General transcription factor IIH subunit 4 (GTF2H4) from Homo sapiens (Human).